A 243-amino-acid chain; its full sequence is 2-C-methyl-D-erythritol 4-phosphate cytidylyltransferase (243 aa).

Belongs to the IspD/TarI cytidylyltransferase family. IspD subfamily.

The enzyme catalyses 2-C-methyl-D-erythritol 4-phosphate + CTP + H(+) = 4-CDP-2-C-methyl-D-erythritol + diphosphate. The protein operates within isoprenoid biosynthesis; isopentenyl diphosphate biosynthesis via DXP pathway; isopentenyl diphosphate from 1-deoxy-D-xylulose 5-phosphate: step 2/6. Its function is as follows. Catalyzes the formation of 4-diphosphocytidyl-2-C-methyl-D-erythritol from CTP and 2-C-methyl-D-erythritol 4-phosphate (MEP). The polypeptide is 2-C-methyl-D-erythritol 4-phosphate cytidylyltransferase (Pelodictyon phaeoclathratiforme (strain DSM 5477 / BU-1)).